Consider the following 201-residue polypeptide: 3-isopropylmalate dehydratase small subunit (201 aa).

It belongs to the LeuD family. LeuD type 1 subfamily. As to quaternary structure, heterodimer of LeuC and LeuD.

It carries out the reaction (2R,3S)-3-isopropylmalate = (2S)-2-isopropylmalate. Its pathway is amino-acid biosynthesis; L-leucine biosynthesis; L-leucine from 3-methyl-2-oxobutanoate: step 2/4. Its function is as follows. Catalyzes the isomerization between 2-isopropylmalate and 3-isopropylmalate, via the formation of 2-isopropylmaleate. The chain is 3-isopropylmalate dehydratase small subunit from Methylorubrum populi (strain ATCC BAA-705 / NCIMB 13946 / BJ001) (Methylobacterium populi).